Reading from the N-terminus, the 490-residue chain is MIPVVALVGRPNVGKSTLFNRLTRTRDALVADFPGLTRDRKYGRAHLAGYEFIVVDTGGIDGTEEGIETRMAEQSLAAIEEADVVLFLTDARAGLTAADLAIAQHLRSREKTTFVVANKVDGIDADSACAEFWSLGLGEVYQMAAAQGRGVTNMIEYSLAPYAEAMGIVKQEDGDDDEEEREFTEEEAEAEQKRLQDLPIKLAIIGKPNVGKSTLTNRILGEERVVVYDEPGTTRDSIYIPMERQGREYVLIDTAGVRRRSKVHETVEKFSVIKTLKAVEDSNVVLLVIDAREGIAEQDLGLLGFVLNAGRALVIAVNKWDGIDQNVKDRVKTELDRRLGFIDFARIHFISALHGTGVGHLFESIEEAYDSATRRVSTSMLTRIMQMSQDDHQPPLVNGRRVKLKYAHAGGYNPPIVVVHGNQVKKLPDSYKRYMMNYFRRSLKVIGTPIQLRFQEGGNPFEGLNTKKLTVSQERRRKRMVGHIRDKNKD.

2 EngA-type G domains span residues 3 to 166 (PVVA…AEAM) and 200 to 373 (IKLA…DSAT). GTP-binding positions include 9-16 (GRPNVGKS), 56-60 (DTGGI), 118-121 (NKVD), 206-213 (GKPNVGKS), 253-257 (DTAGV), and 318-321 (NKWD). Residues 374–458 (RRVSTSMLTR…PIQLRFQEGG (85 aa)) enclose the KH-like domain.

The protein belongs to the TRAFAC class TrmE-Era-EngA-EngB-Septin-like GTPase superfamily. EngA (Der) GTPase family. In terms of assembly, associates with the 50S ribosomal subunit.

In terms of biological role, GTPase that plays an essential role in the late steps of ribosome biogenesis. This Shewanella halifaxensis (strain HAW-EB4) protein is GTPase Der.